The following is a 127-amino-acid chain: Phosphoribosyl-AMP cyclohydrolase (127 aa).

Residue aspartate 75 participates in Mg(2+) binding. Cysteine 76 serves as a coordination point for Zn(2+). 2 residues coordinate Mg(2+): aspartate 77 and aspartate 79. The Zn(2+) site is built by cysteine 93 and cysteine 100.

This sequence belongs to the PRA-CH family. In terms of assembly, homodimer. The cofactor is Mg(2+). Zn(2+) is required as a cofactor.

It is found in the cytoplasm. It catalyses the reaction 1-(5-phospho-beta-D-ribosyl)-5'-AMP + H2O = 1-(5-phospho-beta-D-ribosyl)-5-[(5-phospho-beta-D-ribosylamino)methylideneamino]imidazole-4-carboxamide. Its pathway is amino-acid biosynthesis; L-histidine biosynthesis; L-histidine from 5-phospho-alpha-D-ribose 1-diphosphate: step 3/9. In terms of biological role, catalyzes the hydrolysis of the adenine ring of phosphoribosyl-AMP. This Desulfotalea psychrophila (strain LSv54 / DSM 12343) protein is Phosphoribosyl-AMP cyclohydrolase.